The chain runs to 143 residues: Large ribosomal subunit protein uL16 (143 aa).

The span at Met1–Ile17 shows a compositional bias: basic residues. Positions Met1–Asn20 are disordered.

Belongs to the universal ribosomal protein uL16 family. As to quaternary structure, part of the 50S ribosomal subunit.

Its function is as follows. Binds 23S rRNA and is also seen to make contacts with the A and possibly P site tRNAs. This Zymomonas mobilis subsp. mobilis (strain ATCC 31821 / ZM4 / CP4) protein is Large ribosomal subunit protein uL16.